The chain runs to 428 residues: 5'-deoxyadenosine deaminase (428 aa).

Zn(2+) is bound by residues His-59 and His-61. Positions 88 and 180 each coordinate substrate. His-207 lines the Zn(2+) pocket. Positions 210 and 296 each coordinate substrate. Asp-296 serves as a coordination point for Zn(2+).

The protein belongs to the metallo-dependent hydrolases superfamily. MTA/SAH deaminase family. In terms of assembly, homotetramer. It depends on Zn(2+) as a cofactor.

The catalysed reaction is 5'-deoxyadenosine + H2O + H(+) = 5'-deoxyinosine + NH4(+). The enzyme catalyses S-adenosyl-L-homocysteine + H2O + H(+) = S-inosyl-L-homocysteine + NH4(+). It catalyses the reaction S-methyl-5'-thioadenosine + H2O + H(+) = S-methyl-5'-thioinosine + NH4(+). It carries out the reaction adenosine + H2O + H(+) = inosine + NH4(+). It functions in the pathway amino-acid biosynthesis; S-adenosyl-L-methionine biosynthesis. Catalyzes the deamination of three SAM-derived enzymatic products, namely 5'-deoxyadenosine, S-adenosyl-L-homocysteine, and 5'-methylthioadenosine, to produce the inosine analogs. Can also deaminate adenosine. The preferred substrate for this enzyme is 5'-deoxyadenosine, but all these substrates are efficiently deaminated. Likely functions in a S-adenosyl-L-methionine (SAM) recycling pathway from S-adenosyl-L-homocysteine (SAH) produced from SAM-dependent methylation reactions. May also be involved in the recycling of 5'-deoxyadenosine, whereupon the 5'-deoxyribose moiety of 5'-deoxyinosine is further metabolized to deoxyhexoses used for the biosynthesis of aromatic amino acids in methanogens. This chain is 5'-deoxyadenosine deaminase, found in Methanococcus aeolicus (strain ATCC BAA-1280 / DSM 17508 / OCM 812 / Nankai-3).